Here is a 128-residue protein sequence, read N- to C-terminus: Sulfurtransferase TusD (128 aa).

The active-site Cysteine persulfide intermediate is cysteine 78.

It belongs to the DsrE/TusD family. In terms of assembly, heterohexamer, formed by a dimer of trimers. The hexameric TusBCD complex contains 2 copies each of TusB, TusC and TusD. The TusBCD complex interacts with TusE.

Its subcellular location is the cytoplasm. Its function is as follows. Part of a sulfur-relay system required for 2-thiolation of 5-methylaminomethyl-2-thiouridine (mnm(5)s(2)U) at tRNA wobble positions. Accepts sulfur from TusA and transfers it in turn to TusE. The sequence is that of Sulfurtransferase TusD from Klebsiella pneumoniae (strain 342).